The chain runs to 259 residues: Glucosamine-6-phosphate deaminase (259 aa).

The active-site Proton acceptor; for enolization step is aspartate 66. The active-site For ring-opening step is the aspartate 135. Residue histidine 137 is the Proton acceptor; for ring-opening step of the active site. The active-site For ring-opening step is glutamate 142.

The protein belongs to the glucosamine/galactosamine-6-phosphate isomerase family. NagB subfamily.

It carries out the reaction alpha-D-glucosamine 6-phosphate + H2O = beta-D-fructose 6-phosphate + NH4(+). Its pathway is amino-sugar metabolism; N-acetylneuraminate degradation; D-fructose 6-phosphate from N-acetylneuraminate: step 5/5. Its function is as follows. Catalyzes the reversible isomerization-deamination of glucosamine 6-phosphate (GlcN6P) to form fructose 6-phosphate (Fru6P) and ammonium ion. The chain is Glucosamine-6-phosphate deaminase from Rhodococcus jostii (strain RHA1).